The following is a 256-amino-acid chain: Small ribosomal subunit protein uS2 (256 aa).

This sequence belongs to the universal ribosomal protein uS2 family.

This chain is Small ribosomal subunit protein uS2, found in Rhizobium rhizogenes (strain K84 / ATCC BAA-868) (Agrobacterium radiobacter).